Reading from the N-terminus, the 268-residue chain is Tryptophan synthase alpha chain (268 aa).

Active-site proton acceptor residues include Glu49 and Asp60.

This sequence belongs to the TrpA family. As to quaternary structure, tetramer of two alpha and two beta chains.

It carries out the reaction (1S,2R)-1-C-(indol-3-yl)glycerol 3-phosphate + L-serine = D-glyceraldehyde 3-phosphate + L-tryptophan + H2O. It participates in amino-acid biosynthesis; L-tryptophan biosynthesis; L-tryptophan from chorismate: step 5/5. Functionally, the alpha subunit is responsible for the aldol cleavage of indoleglycerol phosphate to indole and glyceraldehyde 3-phosphate. The protein is Tryptophan synthase alpha chain of Aliivibrio fischeri (strain MJ11) (Vibrio fischeri).